The primary structure comprises 87 residues: Probable Fe(2+)-trafficking protein (87 aa).

Belongs to the Fe(2+)-trafficking protein family.

Its function is as follows. Could be a mediator in iron transactions between iron acquisition and iron-requiring processes, such as synthesis and/or repair of Fe-S clusters in biosynthetic enzymes. In Francisella philomiragia subsp. philomiragia (strain ATCC 25017 / CCUG 19701 / FSC 153 / O#319-036), this protein is Probable Fe(2+)-trafficking protein.